Reading from the N-terminus, the 64-residue chain is MTTEITTVKCPTCKQAVVWDETSIYRPFCSKRCQLIDLGEWADEEKRIPSDDMVSDSEDWSETR.

Zn(2+) is bound by residues Cys10, Cys13, Cys29, and Cys33.

Belongs to the DNA gyrase inhibitor YacG family. Interacts with GyrB. Requires Zn(2+) as cofactor.

In terms of biological role, inhibits all the catalytic activities of DNA gyrase by preventing its interaction with DNA. Acts by binding directly to the C-terminal domain of GyrB, which probably disrupts DNA binding by the gyrase. This is DNA gyrase inhibitor YacG from Pectobacterium carotovorum subsp. carotovorum (strain PC1).